The chain runs to 151 residues: 3-hydroxyacyl-[acyl-carrier-protein] dehydratase FabZ (151 aa).

The active site involves histidine 58.

It belongs to the thioester dehydratase family. FabZ subfamily.

It localises to the cytoplasm. The enzyme catalyses a (3R)-hydroxyacyl-[ACP] = a (2E)-enoyl-[ACP] + H2O. Involved in unsaturated fatty acids biosynthesis. Catalyzes the dehydration of short chain beta-hydroxyacyl-ACPs and long chain saturated and unsaturated beta-hydroxyacyl-ACPs. The polypeptide is 3-hydroxyacyl-[acyl-carrier-protein] dehydratase FabZ (Histophilus somni (strain 129Pt) (Haemophilus somnus)).